We begin with the raw amino-acid sequence, 138 residues long: DNA-directed RNA polymerase subunit omega (138 aa).

Positions 117-138 are disordered; that stretch reads NLLGRDNFFSTPENRNTSNTDS. Residues 124-138 are compositionally biased toward polar residues; sequence FFSTPENRNTSNTDS.

The protein belongs to the RNA polymerase subunit omega family. In terms of assembly, the RNAP catalytic core consists of 2 alpha, 1 beta, 1 beta' and 1 omega subunit. When a sigma factor is associated with the core the holoenzyme is formed, which can initiate transcription.

It carries out the reaction RNA(n) + a ribonucleoside 5'-triphosphate = RNA(n+1) + diphosphate. Promotes RNA polymerase assembly. Latches the N- and C-terminal regions of the beta' subunit thereby facilitating its interaction with the beta and alpha subunits. The protein is DNA-directed RNA polymerase subunit omega of Ehrlichia canis (strain Jake).